Here is a 571-residue protein sequence, read N- to C-terminus: Folylpolyglutamate synthase (571 aa).

Position 122 to 125 (Gly-122 to Ser-125) interacts with ATP. Residues Ser-146, Glu-215, and His-243 each contribute to the Mg(2+) site. ATP is bound by residues Arg-363 and Asp-385.

This sequence belongs to the folylpolyglutamate synthase family. A monovalent cation is required as a cofactor. In terms of tissue distribution, expressed in both shoots and roots, but expression in roots is higher compared with shoots. Distinct expression in the quiescent center (QC) region of the root tip. Also expressed in vascular tissues of the cotyledons and hypocotyls, and the first true leaves of 7 days old seedlings.

The protein resides in the plastid. The protein localises to the chloroplast. It catalyses the reaction (6S)-5,6,7,8-tetrahydrofolyl-(gamma-L-Glu)(n) + L-glutamate + ATP = (6S)-5,6,7,8-tetrahydrofolyl-(gamma-L-Glu)(n+1) + ADP + phosphate + H(+). Its pathway is cofactor biosynthesis; tetrahydrofolylpolyglutamate biosynthesis. Functionally, catalyzes conversion of folates to polyglutamate derivatives allowing concentration of folate compounds in the cell and the intracellular retention of these cofactors, which are important substrates for most of the folate-dependent enzymes that are involved in one-carbon transfer reactions involved in purine, pyrimidine and amino acid synthesis. Essential for organellar and whole-plant folate homeostasis. Required for postembryonic root development. Generates polyglutamylated folate cofactors to support C1 metabolism required for meristem maintenance and cell expansion during postembryonic root development. The chain is Folylpolyglutamate synthase from Arabidopsis thaliana (Mouse-ear cress).